Reading from the N-terminus, the 817-residue chain is Phospholipase D alpha 2 (817 aa).

A C2 domain is found at 1-130 (MAHLLLHGTL…LSGEAIERRL (130 aa)). Aspartate 192 contributes to the Ca(2+) binding site. Positions 333 to 372 (YMITHHQKTVIVDHDMPVPRGGGSRRIVSFVGGLDLCDGR) constitute a PLD phosphodiesterase 1 domain. Residues histidine 338, lysine 340, and aspartate 345 contribute to the active site. Histidine 338 serves as a coordination point for a 1,2-diacyl-sn-glycero-3-phosphate. Histidine 378 and histidine 412 together coordinate Ca(2+). Residues glutamine 529 and histidine 668 each coordinate a 1,2-diacyl-sn-glycero-3-phosphate. One can recognise a PLD phosphodiesterase 2 domain in the interval 663-690 (FMIYVHSKMMIVDDEYIIVGSANINQRS). Active-site residues include histidine 668, lysine 670, and aspartate 675. Glutamate 730 serves as a coordination point for Ca(2+).

The protein belongs to the phospholipase D family. C2-PLD subfamily. It depends on Ca(2+) as a cofactor.

It catalyses the reaction a 1,2-diacyl-sn-glycero-3-phosphocholine + H2O = a 1,2-diacyl-sn-glycero-3-phosphate + choline + H(+). Hydrolyzes glycerol-phospholipids at the terminal phosphodiesteric bond. Plays an important role in various cellular processes. This chain is Phospholipase D alpha 2 (PLD2), found in Oryza sativa subsp. japonica (Rice).